The primary structure comprises 462 residues: Cysteine--tRNA ligase (462 aa).

Cysteine 29 serves as a coordination point for Zn(2+). Residues proline 31–asparagine 41 carry the 'HIGH' region motif. 3 residues coordinate Zn(2+): cysteine 211, histidine 236, and glutamate 240. The 'KMSKS' region signature appears at lysine 269–serine 273. Position 272 (lysine 272) interacts with ATP.

This sequence belongs to the class-I aminoacyl-tRNA synthetase family. As to quaternary structure, monomer. Zn(2+) serves as cofactor.

It is found in the cytoplasm. It catalyses the reaction tRNA(Cys) + L-cysteine + ATP = L-cysteinyl-tRNA(Cys) + AMP + diphosphate. The polypeptide is Cysteine--tRNA ligase (Caulobacter sp. (strain K31)).